A 438-amino-acid chain; its full sequence is Enolase (438 aa).

The substrate site is built by H159 and E168. Catalysis depends on E211, which acts as the Proton donor. Mg(2+) is bound by residues D246, E297, and D322. E297 and D322 together coordinate substrate. The active-site Proton acceptor is the K347. Residues S374–S377 and K398 each bind substrate.

This sequence belongs to the enolase family. As to quaternary structure, homodimer. It depends on Mg(2+) as a cofactor.

It localises to the cytoplasm. It catalyses the reaction (2R)-2-phosphoglycerate = phosphoenolpyruvate + H2O. It participates in carbohydrate degradation; glycolysis; pyruvate from D-glyceraldehyde 3-phosphate: step 4/5. Its function is as follows. Involved in osmoadaptation. This Emericella nidulans (strain FGSC A4 / ATCC 38163 / CBS 112.46 / NRRL 194 / M139) (Aspergillus nidulans) protein is Enolase (enoA).